A 601-amino-acid polypeptide reads, in one-letter code: Potassium voltage-gated channel subfamily A member 5 (601 aa).

Residues 1 to 200 (MEIALVPLEN…FYQLGDEAME (200 aa)) form a tetramerization domain region. Residues 1–236 (MEIALVPLEN…LIFEYPESSG (236 aa)) are Cytoplasmic-facing. The tract at residues 19 to 93 (GGEAGTGCSQ…DEEGEGDPAL (75 aa)) is disordered. Over residues 65 to 74 (RPLPPLPQDP) the composition is skewed to pro residues. K210 participates in a covalent cross-link: Glycyl lysine isopeptide (Lys-Gly) (interchain with G-Cter in SUMO). A helical membrane pass occupies residues 237–258 (SARGIAIVSVLVILISIITFCL). Topologically, residues 259 to 312 (ETLPEFRDERELLRHPPVPHQPLGPSRGANGSGPLAPPSGPTVAPLLPRTLADP) are extracellular. The disordered stretch occupies residues 275-297 (PVPHQPLGPSRGANGSGPLAPPS). Residue N288 is glycosylated (N-linked (GlcNAc...) asparagine). The helical transmembrane segment at 313–334 (FFIVETTCVIWFTFELLVRFFA) threads the bilayer. A lipid anchor (S-palmitoyl cysteine) is attached at C335. At 335-345 (CPSKAEFSRNI) the chain is on the cytoplasmic side. A helical membrane pass occupies residues 346 to 366 (MNIIDVVAIFPYFITLGTELA). Over 367–383 (EQPGGGGGGQNGQQAMS) the chain is Extracellular. Residues 384-404 (LAILRVIRLVRVFRIFKLSRH) traverse the membrane as a helical; Voltage-sensor segment. The Cytoplasmic segment spans residues 405–419 (SKGLQILGKTLQASM). The S4-S5 linker stretch occupies residues 406–419 (KGLQILGKTLQASM). A helical membrane pass occupies residues 420 to 441 (RELGLLIFFLFIGVILFSSAVY). The Extracellular segment spans residues 442-455 (FAEADNQETHFSSI). Residues 456–467 (PDAFWWAVVTMT) constitute an intramembrane region (helical). The short motif at 468 to 473 (TVGYGD) is the Selectivity filter element. The stretch at 468 to 475 (TVGYGDMR) is an intramembrane region. Residues 476 to 482 (PVTVGGK) lie on the Extracellular side of the membrane. A helical membrane pass occupies residues 483–511 (IVGSLCAIAGVLTIALPVPVIVSNFNYFY). Over 512-601 (HRETDHEEQA…CLDTSRETDL (90 aa)) the chain is Cytoplasmic. The tract at residues 521-545 (AALKEEQGSQSHGTGLDSGGPRKAS) is disordered. K524 is covalently cross-linked (Glycyl lysine isopeptide (Lys-Gly) (interchain with G-Cter in SUMO)). The PDZ-binding signature appears at 599–601 (TDL).

The protein belongs to the potassium channel family. A (Shaker) (TC 1.A.1.2) subfamily. Kv1.5/KCNA5 sub-subfamily. Homotetramer and heterotetramer of potassium channel proteins. Interacts with DLG1, which enhances channel currents. Forms a ternary complex with DLG1 and CAV3. Interacts with KCNAB1. Interacts with UBE2I. Interacts with XIRP2; the interaction is required for normal action potential configuration in the heart. Post-translationally, glycosylated. In terms of processing, sumoylated on Lys-210, and Lys-524, preferentially with SUMO3. Sumoylation regulates the voltage sensitivity of the channel.

The protein localises to the cell membrane. The enzyme catalyses K(+)(in) = K(+)(out). Its function is as follows. Voltage-gated potassium channel that mediates transmembrane potassium transport in excitable membranes. Forms tetrameric potassium-selective channels through which potassium ions pass in accordance with their electrochemical gradient. The channel alternates between opened and closed conformations in response to the voltage difference across the membrane. Can form functional homotetrameric channels and heterotetrameric channels that contain variable proportions of KCNA1, KCNA2, KCNA4, KCNA5, and possibly other family members as well; channel properties depend on the type of alpha subunits that are part of the channel. Channel properties are modulated by cytoplasmic beta subunits that regulate the subcellular location of the alpha subunits and promote rapid inactivation. Homotetrameric channels display rapid activation and slow inactivation. Required for normal electrical conduction including formation of the infranodal ventricular conduction system and normal action potential configuration, as a result of its interaction with XIRP2. May play a role in regulating the secretion of insulin in normal pancreatic islets. In Mustela putorius furo (European domestic ferret), this protein is Potassium voltage-gated channel subfamily A member 5 (KCNA5).